Here is a 198-residue protein sequence, read N- to C-terminus: Recombination protein RecR (198 aa).

Residues Cys-56–Cys-71 form a C4-type zinc finger. The Toprim domain maps to Gly-79–Pro-174.

It belongs to the RecR family.

May play a role in DNA repair. It seems to be involved in an RecBC-independent recombinational process of DNA repair. It may act with RecF and RecO. The protein is Recombination protein RecR of Tropheryma whipplei (strain Twist) (Whipple's bacillus).